The sequence spans 192 residues: Peptide deformylase (192 aa).

Positions 108 and 150 each coordinate Fe cation. Glu151 is a catalytic residue. His154 provides a ligand contact to Fe cation.

Belongs to the polypeptide deformylase family. It depends on Fe(2+) as a cofactor.

It carries out the reaction N-terminal N-formyl-L-methionyl-[peptide] + H2O = N-terminal L-methionyl-[peptide] + formate. Its function is as follows. Removes the formyl group from the N-terminal Met of newly synthesized proteins. Requires at least a dipeptide for an efficient rate of reaction. N-terminal L-methionine is a prerequisite for activity but the enzyme has broad specificity at other positions. This is Peptide deformylase from Opitutus terrae (strain DSM 11246 / JCM 15787 / PB90-1).